Reading from the N-terminus, the 563-residue chain is Nigrin b (563 aa).

An N-terminal signal peptide occupies residues 1-25 (MRVVAAAMLYFYIVVLAICSVGIQG). E188 is a catalytic residue. N221 is a glycosylation site (N-linked (GlcNAc...) asparagine). 3 disulfide bridges follow: C274–C302, C319–C338, and C360–C377. 2 consecutive Ricin B-type lectin domains span residues 305–431 (RTSF…WTVT) and 434–559 (VKPI…WVTQ). The stretch at 316-356 (DGLCVDVRNGYDTDGTPLQLWPCGTQRNQRWTFDSDDTIRS) is one 1-alpha repeat. One copy of the 1-beta repeat lies at 357 to 397 (MGKCMTANGLNNGSNIVIFNCSTAAENAIKWEVPIDGSIIN). Residues N368 and N376 are each glycosylated (N-linked (GlcNAc...) asparagine). Residues 400–432 (SGLVMTAPRAASRTILLLEDNIYAASQGWTVTN) form a 1-gamma repeat. Residues 445–482 (KEMCLQSNGENNGVWMEDCEATSLQQQWALYGDRTIRV) form a 2-alpha repeat. A disulfide bond links C448 and C463. N483 carries an N-linked (GlcNAc...) asparagine glycan. The stretch at 486–524 (RGLCVTTNGYNSKDLIIILKCQGLPSQRWFFNSDGAIVN) is one 2-beta repeat. The cysteines at positions 489 and 506 are disulfide-linked. One copy of the 2-gamma repeat lies at 527-554 (SRHVMDVRASNVSLREIIIFPATGNPNQ). Residue N537 is glycosylated (N-linked (GlcNAc...) asparagine).

It in the N-terminal section; belongs to the ribosome-inactivating protein family. Type 2 RIP subfamily. In terms of assembly, disulfide-linked dimer of A and B chains.

The enzyme catalyses Endohydrolysis of the N-glycosidic bond at one specific adenosine on the 28S rRNA.. Non-toxic type 2 RIP which strongly inhibits mammalian protein synthesis but does not affect plant nor bacterial protein synthesis. The A chain is responsible for inhibiting protein synthesis through the catalytic inactivation of 60S ribosomal subunits by removing adenine from position 4,324 of 28S rRNA. Functionally, the B chain is a galactose-specific lectin that facilitates the binding of nigrin b to the cell membrane that precedes endocytosis. The sequence is that of Nigrin b from Sambucus nigra (European elder).